The primary structure comprises 387 residues: 3-ketoacyl-CoA thiolase (387 aa).

Residue C91 is the Acyl-thioester intermediate of the active site. Catalysis depends on proton acceptor residues H343 and C373.

Belongs to the thiolase-like superfamily. Thiolase family. In terms of assembly, heterotetramer of two alpha chains (FadB) and two beta chains (FadA).

The protein resides in the cytoplasm. It carries out the reaction an acyl-CoA + acetyl-CoA = a 3-oxoacyl-CoA + CoA. It participates in lipid metabolism; fatty acid beta-oxidation. In terms of biological role, catalyzes the final step of fatty acid oxidation in which acetyl-CoA is released and the CoA ester of a fatty acid two carbons shorter is formed. The polypeptide is 3-ketoacyl-CoA thiolase (Enterobacter sp. (strain 638)).